Reading from the N-terminus, the 277-residue chain is MLAVSSRRVLPGFTLSLGTSLLFVCLILLLPLSALVMQLSQMSWAQYWDVVTNPQVVAAYKVTLLAAFVASIFNGVFGLLMAWILTRYRFPGRTLLDALMDLPFALPTAVAGLTLASLFSVNGFYGQFLAQFDIKVTYTWLGIAVAMAFTSIPFVVRTVQPVLEELGPEYEEAAQTLGATRLQSFRKVVLPELSPALIAGVALSFTRSLGEFGAVIFIAGNIAWKTEVTSLMIFVRLQEFDYPAASAIASVILAASLLLLFSINTLQSRFGRRVVGH.

7 consecutive transmembrane segments (helical) span residues 17-37 (LGTS…ALVM), 64-84 (LLAA…MAWI), 99-119 (LMDL…ASLF), 136-156 (VTYT…PFVV), 188-205 (VVLP…ALSF), 215-235 (VIFI…MIFV), and 243-263 (PAAS…LFSI). The region spanning 60-263 (YKVTLLAAFV…AASLLLLFSI (204 aa)) is the ABC transmembrane type-1 domain.

Belongs to the binding-protein-dependent transport system permease family. CysTW subfamily. The complex is composed of two ATP-binding proteins (CysA), two transmembrane proteins (CysT and CysW) and a solute-binding protein (CysP).

Its subcellular location is the cell inner membrane. Its function is as follows. Part of the ABC transporter complex CysAWTP (TC 3.A.1.6.1) involved in sulfate/thiosulfate import. Probably responsible for the translocation of the substrate across the membrane. This Salmonella typhimurium (strain LT2 / SGSC1412 / ATCC 700720) protein is Sulfate transport system permease protein CysT (cysU).